Here is a 421-residue protein sequence, read N- to C-terminus: Testin (421 aa).

Positions 92 to 199 (MILTNPVAAK…GDVKLPQEMD (108 aa)) constitute a PET domain. LIM zinc-binding domains follow at residues 234 to 297 (YSCY…CDSE), 299 to 359 (PRCA…NHAV), and 362 to 421 (QGCH…KMMS).

This sequence belongs to the prickle / espinas / testin family. As to quaternary structure, interacts via LIM domain 1 with ZYX. Interacts (via LIM domain 3) with ENAH and VASP. Interacts with ALKBH4, talin, actin, alpha-actinin, GRIP1 and PXN. Interacts (via LIM domain 2) with ACTL7A (via N-terminus). Heterodimer with ACTL7A; the heterodimer interacts with ENAH to form a heterotrimer.

It localises to the cytoplasm. It is found in the cell junction. The protein resides in the focal adhesion. Functionally, scaffold protein that may play a role in cell adhesion, cell spreading and in the reorganization of the actin cytoskeleton. Plays a role in the regulation of cell proliferation. May act as a tumor suppressor. This chain is Testin (TES), found in Loxodonta africana (African elephant).